Reading from the N-terminus, the 188-residue chain is Phosphoribosylglycinamide formyltransferase (188 aa).

A N(1)-(5-phospho-beta-D-ribosyl)glycinamide-binding site is contributed by 12 to 14 (GSN). (6R)-10-formyltetrahydrofolate is bound by residues K66, 91–94 (MRLI), and N108. The Proton donor role is filled by H110.

This sequence belongs to the GART family.

The enzyme catalyses N(1)-(5-phospho-beta-D-ribosyl)glycinamide + (6R)-10-formyltetrahydrofolate = N(2)-formyl-N(1)-(5-phospho-beta-D-ribosyl)glycinamide + (6S)-5,6,7,8-tetrahydrofolate + H(+). Its pathway is purine metabolism; IMP biosynthesis via de novo pathway; N(2)-formyl-N(1)-(5-phospho-D-ribosyl)glycinamide from N(1)-(5-phospho-D-ribosyl)glycinamide (10-formyl THF route): step 1/1. Functionally, catalyzes the transfer of a formyl group from 10-formyltetrahydrofolate to 5-phospho-ribosyl-glycinamide (GAR), producing 5-phospho-ribosyl-N-formylglycinamide (FGAR) and tetrahydrofolate. The protein is Phosphoribosylglycinamide formyltransferase of Staphylococcus aureus (strain COL).